The primary structure comprises 175 residues: Gamma-crystallin B (175 aa).

Beta/gamma crystallin 'Greek key' domains follow at residues 2-40 and 41-83; these read GKIT…RVDS and GCWM…RLIP. The tract at residues 84-88 is connecting peptide; that stretch reads QHSGT. Beta/gamma crystallin 'Greek key' domains are found at residues 89 to 129 and 130 to 172; these read FRMR…NVLD and GCWV…RRVM.

This sequence belongs to the beta/gamma-crystallin family. Monomer.

In terms of biological role, crystallins are the dominant structural components of the vertebrate eye lens. In Canis lupus familiaris (Dog), this protein is Gamma-crystallin B (CRYGB).